Consider the following 95-residue polypeptide: Toxin HigB-1 (95 aa).

In terms of biological role, toxic component of a type II toxin-antitoxin (TA) system. Inhibits translation by cleavage of mRNA. In Vibrio cholerae serotype O1 (strain ATCC 39315 / El Tor Inaba N16961), this protein is Toxin HigB-1 (higB-1).